Reading from the N-terminus, the 259-residue chain is Undecaprenyl-diphosphatase 4 (259 aa).

8 consecutive transmembrane segments (helical) span residues 1 to 21 (MNWL…FLPI), 39 to 59 (AGLF…FIYY), 71 to 91 (FSKL…IGLL), 99 to 119 (ISKT…FLYM), 133 to 153 (ITYK…FPAI), 174 to 194 (AYFS…LQFV), 208 to 228 (SLIV…SWMI), and 239 to 259 (FAYY…TDVF).

The protein belongs to the UppP family.

The protein resides in the cell membrane. The enzyme catalyses di-trans,octa-cis-undecaprenyl diphosphate + H2O = di-trans,octa-cis-undecaprenyl phosphate + phosphate + H(+). Catalyzes the dephosphorylation of undecaprenyl diphosphate (UPP). Confers resistance to bacitracin. This is Undecaprenyl-diphosphatase 4 from Bacillus cereus (strain ZK / E33L).